Reading from the N-terminus, the 205-residue chain is Probable GTP-binding protein EngB (205 aa).

The 175-residue stretch at Asn25–Lys199 folds into the EngB-type G domain. GTP-binding positions include Gly33–Ser40, Gly60–Leu64, Asp78–Gly81, Thr145–Asp148, and Phe178–Ser180. Mg(2+) is bound by residues Ser40 and Thr62.

The protein belongs to the TRAFAC class TrmE-Era-EngA-EngB-Septin-like GTPase superfamily. EngB GTPase family. Mg(2+) is required as a cofactor.

Necessary for normal cell division and for the maintenance of normal septation. The sequence is that of Probable GTP-binding protein EngB from Buchnera aphidicola subsp. Acyrthosiphon pisum (strain 5A).